A 135-amino-acid polypeptide reads, in one-letter code: MLSPKRTRFRKQHRGRLKGISSRGNRICFGRYALQTLEPAWITSRQIEAGRRAMSRNVRRGGKIWVRIFPDKPVTVRPAETRMGSGKGSPEYWVAVVKPGKILYEMGGVPENIARKAISIAASKMPIKTQFIISE.

This sequence belongs to the universal ribosomal protein uL16 family. Part of the 50S ribosomal subunit.

It localises to the plastid. The protein localises to the chloroplast. The sequence is that of Large ribosomal subunit protein uL16c from Lepidium virginicum (Virginia pepperweed).